The primary structure comprises 429 residues: MSSVVVVGTQWGDEGKGKITDFLSEHAEVVARYQGGNNAGHTIVFGGVKYKLHLIPSGIFYKEKICVIGNGLVVDPKALLEELKYLHDRGVSTDNLRVSNRAHVILPYHLKQDELEEASKGDNKIGTTKKGIGPAYMDKAARIGIRMADLLDREAFKEKLERNLVEKNRLFEKMYDTEGFTVEEIFEEYFEYGQQIAQYVCDTSVVLNDALDNNHRVLFEGAQGVMLDIDHGTYPFVTSSNPIAGGVTVGTGVGPAKVTRVVGVCKAYTSRVGDGPFPTELHDEIGHQIREVGREYGTTTGRPRRVGWFDSVVVRHARRVSGLTDLSLNSIDVLTGIPTLKICVAYKYNGEVIDEVPANLNILAKCEPVYEELPGWEEDITGVKSLDELPENARKYVERVSELTGIQISMFSVGPDRNQTNIVRNVYEA.

Residues 12-18 (GDEGKGK) and 40-42 (GHT) each bind GTP. Asp-13 functions as the Proton acceptor in the catalytic mechanism. Asp-13 and Gly-40 together coordinate Mg(2+). IMP-binding positions include 13-16 (DEGK), 38-41 (NAGH), Thr-128, Arg-142, Gln-223, Thr-238, and Arg-302. Residue His-41 is the Proton donor of the active site. 298-304 (TTTGRPR) lines the substrate pocket. GTP contacts are provided by residues Arg-304, 330–332 (SID), and 412–414 (SVG).

Belongs to the adenylosuccinate synthetase family. As to quaternary structure, homodimer. Mg(2+) is required as a cofactor.

Its subcellular location is the cytoplasm. The enzyme catalyses IMP + L-aspartate + GTP = N(6)-(1,2-dicarboxyethyl)-AMP + GDP + phosphate + 2 H(+). It participates in purine metabolism; AMP biosynthesis via de novo pathway; AMP from IMP: step 1/2. Functionally, plays an important role in the de novo pathway of purine nucleotide biosynthesis. Catalyzes the first committed step in the biosynthesis of AMP from IMP. The polypeptide is Adenylosuccinate synthetase (Bacillus cereus (strain ATCC 14579 / DSM 31 / CCUG 7414 / JCM 2152 / NBRC 15305 / NCIMB 9373 / NCTC 2599 / NRRL B-3711)).